An 862-amino-acid polypeptide reads, in one-letter code: Taxadiene synthase (862 aa).

Mg(2+)-binding residues include Asp-613, Asp-617, Asn-757, Thr-761, and Glu-765. Residues 613-617 (DDMAD) carry the DDXXD motif motif.

The protein belongs to the terpene synthase family. Mg(2+) is required as a cofactor.

It catalyses the reaction (2E,6E,10E)-geranylgeranyl diphosphate = taxa-4(5),11(12)-diene + diphosphate. It functions in the pathway alkaloid biosynthesis; taxol biosynthesis; taxa-4(20),11-dien-5alpha-ol from geranylgeranyl diphosphate: step 1/2. In terms of biological role, catalyzes the cyclization of the ubiquitous isoprenoid intermediate geranylgeranyl diphosphate to taxa-4,11-diene, the parent olefin with a taxane skeleton. The chain is Taxadiene synthase (TDC1) from Taxus baccata (English yew).